A 104-amino-acid chain; its full sequence is MAAIQGIEGGISQLQATAMAANGQETHSQSTVSFAGQLHAALDRISDRQTAARVQAEKFTLGEPGIALNDVMADMQKASVSMQMGIQVRNKLVAAYQEVMSMQV.

It belongs to the FliE family.

The protein localises to the bacterial flagellum basal body. This Salmonella typhi protein is Flagellar hook-basal body complex protein FliE.